Reading from the N-terminus, the 615-residue chain is Matrix metalloproteinase-25 (615 aa).

The propeptide occupies Met-1–Arg-162. A helical membrane pass occupies residues Ile-53–Pro-73. The Cysteine switch motif lies at Pro-143 to Val-150. Residues Cys-145 and His-287 each contribute to the Zn(2+) site. Glu-288 is a catalytic residue. The Zn(2+) site is built by His-291 and His-297. The segment at Val-336–Pro-366 is disordered. A compositionally biased stretch (pro residues) spans Leu-349 to Pro-366. 4 Hemopexin repeats span residues Pro-368–Leu-417, Val-421–Pro-466, Gly-467–Pro-515, and Phe-516–Cys-562. The cysteines at positions 371 and 562 are disulfide-linked. The disordered stretch occupies residues Ala-547–Arg-582. Ala-593 carries the GPI-anchor amidated alanine lipid modification. The propeptide at Ser-594–Tyr-615 is removed in mature form.

This sequence belongs to the peptidase M10A family. Zn(2+) serves as cofactor. Ca(2+) is required as a cofactor. Post-translationally, the precursor is cleaved by a furin endopeptidase.

It localises to the cell membrane. In terms of biological role, may activate progelatinase A. The protein is Matrix metalloproteinase-25 (Mmp25) of Mus musculus (Mouse).